We begin with the raw amino-acid sequence, 150 residues long: Globin-2 (150 aa).

The region spanning 11–150 (PLSDAEKNKI…MICILLSSAY (140 aa)) is the Globin domain. Positions 74 and 106 each coordinate heme b.

It belongs to the globin family. In terms of assembly, monomer.

The protein is Globin-2 of Mordacia mordax (Southern hemisphere lamprey).